A 397-amino-acid chain; its full sequence is Cytoplasmic tRNA 2-thiolation protein 2 (397 aa).

This sequence belongs to the CTU2/NCS2 family.

It localises to the cytoplasm. It functions in the pathway tRNA modification; 5-methoxycarbonylmethyl-2-thiouridine-tRNA biosynthesis. In terms of biological role, plays a central role in 2-thiolation of mcm(5)S(2)U at tRNA wobble positions of tRNA(Lys), tRNA(Glu) and tRNA(Gln). May act by forming a heterodimer with NCS6/CTU1 that ligates sulfur from thiocarboxylated URM1 onto the uridine of tRNAs at wobble position. This Drosophila grimshawi (Hawaiian fruit fly) protein is Cytoplasmic tRNA 2-thiolation protein 2.